The sequence spans 73 residues: UPF0154 protein MG335.1 (73 aa).

A helical transmembrane segment spans residues 6 to 26; it reads LALGLGIPLSLLVGMILGYFI.

The protein belongs to the UPF0154 family.

It is found in the membrane. This Mycoplasma genitalium (strain ATCC 33530 / DSM 19775 / NCTC 10195 / G37) (Mycoplasmoides genitalium) protein is UPF0154 protein MG335.1.